The following is a 102-amino-acid chain: Phosphoribosyl-ATP pyrophosphatase (102 aa).

This sequence belongs to the PRA-PH family.

It is found in the cytoplasm. It catalyses the reaction 1-(5-phospho-beta-D-ribosyl)-ATP + H2O = 1-(5-phospho-beta-D-ribosyl)-5'-AMP + diphosphate + H(+). The protein operates within amino-acid biosynthesis; L-histidine biosynthesis; L-histidine from 5-phospho-alpha-D-ribose 1-diphosphate: step 2/9. This Dinoroseobacter shibae (strain DSM 16493 / NCIMB 14021 / DFL 12) protein is Phosphoribosyl-ATP pyrophosphatase.